The sequence spans 622 residues: Threonine--tRNA ligase (622 aa).

The interval 1-141 (MKTLLIHSDY…SRKITTERKE (141 aa)) is editing domain. Positions 199 to 498 (PHVKYIKEKE…TLENKPPALP (300 aa)) are catalytic. Zn(2+) contacts are provided by cysteine 291, histidine 343, and histidine 467.

The protein belongs to the class-II aminoacyl-tRNA synthetase family. In terms of assembly, homodimer. The cofactor is Zn(2+).

The protein localises to the cytoplasm. It carries out the reaction tRNA(Thr) + L-threonine + ATP = L-threonyl-tRNA(Thr) + AMP + diphosphate + H(+). Catalyzes the attachment of threonine to tRNA(Thr) in a two-step reaction: L-threonine is first activated by ATP to form Thr-AMP and then transferred to the acceptor end of tRNA(Thr). Also edits incorrectly charged L-seryl-tRNA(Thr). The polypeptide is Threonine--tRNA ligase (Methanococcus maripaludis (strain C7 / ATCC BAA-1331)).